A 695-amino-acid polypeptide reads, in one-letter code: Elongation factor G (695 aa).

The tr-type G domain maps to 12–286 (DKLRNIGIMA…AVIDYLPSPL (275 aa)). Residues 21–28 (AHIDAGKT), 85–89 (DTPGH), and 139–142 (NKMD) each bind GTP.

This sequence belongs to the TRAFAC class translation factor GTPase superfamily. Classic translation factor GTPase family. EF-G/EF-2 subfamily.

Its subcellular location is the cytoplasm. Its function is as follows. Catalyzes the GTP-dependent ribosomal translocation step during translation elongation. During this step, the ribosome changes from the pre-translocational (PRE) to the post-translocational (POST) state as the newly formed A-site-bound peptidyl-tRNA and P-site-bound deacylated tRNA move to the P and E sites, respectively. Catalyzes the coordinated movement of the two tRNA molecules, the mRNA and conformational changes in the ribosome. This is Elongation factor G from Thermotoga petrophila (strain ATCC BAA-488 / DSM 13995 / JCM 10881 / RKU-1).